We begin with the raw amino-acid sequence, 845 residues long: ATPase morc-1 (845 aa).

ATP-binding positions include asparagine 43, 88 to 90 (SAK), and 97 to 103 (RYGNGLK). Position 43 (asparagine 43) interacts with Mg(2+). A coiled-coil region spans residues 284-311 (AAYNKILDEKNETVKKCEEEKALVMSEI). Lysine 422 lines the ATP pocket. Disordered stretches follow at residues 566-590 (LPQK…SASS) and 628-739 (KMEP…GKAV). Residues 574 to 590 (SAPSSSDSQNSIRSASS) are compositionally biased toward low complexity. The segment covering 637 to 646 (HDSHIAEVQR) has biased composition (basic and acidic residues).

As to quaternary structure, predominantly forms monomers and dimers, but multimerizes to form trimers and tetramers upon DNA binding. In terms of tissue distribution, expressed in germline and somatic cells.

It localises to the nucleus. Its subcellular location is the nuclear body. The enzyme catalyses ATP + H2O = ADP + phosphate + H(+). In terms of biological role, binds non-specifically to DNA and forms static foci which grow by recruiting other morc-1 molecules, and thereby stimulates conformational changes and compaction of DNA, which appears to be enhanced by ATP-binding, but does not require ATP activity. Preferentially binds to long DNAs. Compacts and entraps segments of DNA by sequentially forming loops along the DNA, beginning at the free ends of single- and double-tethered DNA. Does not extrude the DNA loops on compacted double-tethered DNA. Involved in gene silencing. Plays a role in germline RNA interference (RNAi), and in particular, the silencing of endogenous small interfering RNA (endo-siRNA) target genes. May play a role in heterochromatin localization and condensation, and the siRNAi-directed trimethylation of 'Lys-9' of histone H3 in hermaphrodite X chromosomes. Promotes transgenerational epigenetic inheritance and germline immortality. In Caenorhabditis elegans, this protein is ATPase morc-1.